The primary structure comprises 338 residues: Aspartate-semialdehyde dehydrogenase (338 aa).

NADP(+) is bound by residues 13-16 and 41-42; these read SGAV and RS. Position 101 (arginine 101) interacts with phosphate. The active-site Acyl-thioester intermediate is the cysteine 132. Glutamine 159 provides a ligand contact to substrate. NADP(+) is bound by residues 162-163 and proline 187; that span reads SG. Residue lysine 216 participates in phosphate binding. Position 238 (arginine 238) interacts with substrate. Residue histidine 245 is the Proton acceptor of the active site. Residue asparagine 317 participates in NADP(+) binding.

Belongs to the aspartate-semialdehyde dehydrogenase family. As to quaternary structure, homodimer.

The catalysed reaction is L-aspartate 4-semialdehyde + phosphate + NADP(+) = 4-phospho-L-aspartate + NADPH + H(+). The protein operates within amino-acid biosynthesis; L-lysine biosynthesis via DAP pathway; (S)-tetrahydrodipicolinate from L-aspartate: step 2/4. It functions in the pathway amino-acid biosynthesis; L-methionine biosynthesis via de novo pathway; L-homoserine from L-aspartate: step 2/3. It participates in amino-acid biosynthesis; L-threonine biosynthesis; L-threonine from L-aspartate: step 2/5. In terms of biological role, catalyzes the NADPH-dependent formation of L-aspartate-semialdehyde (L-ASA) by the reductive dephosphorylation of L-aspartyl-4-phosphate. The chain is Aspartate-semialdehyde dehydrogenase from Shewanella sp. (strain DB6705).